Reading from the N-terminus, the 560-residue chain is N-acetylglucosamine-6-sulfatase (560 aa).

The interval 1–25 (MRLLSLAPDRPRRGGPRHLTSGSPA) is disordered. Residues 1–48 (MRLLSLAPDRPRRGGPRHLTSGSPALPPPPPLLLLLLLLGGCLGVSGA) form the signal peptide. Ca(2+) is bound by residues Asp-63, Asp-64, and Cys-99. The active-site Nucleophile is Cys-99. Position 99 is a 3-oxoalanine (Cys) (Cys-99). Residues Asn-119, Asn-125, Asn-191, Asn-206, Asn-218, Asn-287, and Asn-325 are each glycosylated (N-linked (GlcNAc...) asparagine). 2 residues coordinate Ca(2+): Asp-334 and Asn-335. 6 N-linked (GlcNAc...) asparagine glycosylation sites follow: Asn-370, Asn-395, Asn-413, Asn-430, Asn-457, and Asn-488. Ser-549 is modified (phosphoserine).

Belongs to the sulfatase family. The cofactor is Ca(2+). In terms of processing, the conversion to 3-oxoalanine (also known as C-formylglycine, FGly), of a serine or cysteine residue in prokaryotes and of a cysteine residue in eukaryotes, is critical for catalytic activity.

The protein resides in the lysosome. The catalysed reaction is Hydrolysis of the 6-sulfate groups of the N-acetyl-D-glucosamine 6-sulfate units of heparan sulfate and keratan sulfate.. Functionally, hydrolyzes 6-sulfate groups in N-acetyl-d-glucosaminide units of heparin sulfate and keratan sulfate. This is N-acetylglucosamine-6-sulfatase (GNS) from Bos taurus (Bovine).